The primary structure comprises 53 residues: uncharacterized protein (53 aa).

The segment covering 1 to 10 (MHILTRSSKN) has biased composition (polar residues). A disordered region spans residues 1-25 (MHILTRSSKNAFPRSRSRQDIHISS).

This is an uncharacterized protein from Saccharomyces cerevisiae (strain ATCC 204508 / S288c) (Baker's yeast).